The chain runs to 289 residues: Bifunctional protein FolD 2 (289 aa).

Residues 162–164, S187, and I228 contribute to the NADP(+) site; that span reads GRS.

It belongs to the tetrahydrofolate dehydrogenase/cyclohydrolase family. In terms of assembly, homodimer.

The enzyme catalyses (6R)-5,10-methylene-5,6,7,8-tetrahydrofolate + NADP(+) = (6R)-5,10-methenyltetrahydrofolate + NADPH. It carries out the reaction (6R)-5,10-methenyltetrahydrofolate + H2O = (6R)-10-formyltetrahydrofolate + H(+). It functions in the pathway one-carbon metabolism; tetrahydrofolate interconversion. Catalyzes the oxidation of 5,10-methylenetetrahydrofolate to 5,10-methenyltetrahydrofolate and then the hydrolysis of 5,10-methenyltetrahydrofolate to 10-formyltetrahydrofolate. In Deinococcus geothermalis (strain DSM 11300 / CIP 105573 / AG-3a), this protein is Bifunctional protein FolD 2.